A 460-amino-acid chain; its full sequence is Lipase member H-B (460 aa).

The signal sequence occupies residues 1-26; the sequence is MLLSFYFNGLLLVGCLLSWGRSDTEG. N-linked (GlcNAc...) asparagine glycans are attached at residues Asn-67 and Asn-75. Ser-163 (nucleophile) is an active-site residue. N-linked (GlcNAc...) asparagine glycosylation occurs at Asn-177. Catalysis depends on Asp-187, which acts as the Charge relay system. A disulfide bridge links Cys-242 with Cys-255. Residue His-257 is the Charge relay system of the active site. 2 cysteine pairs are disulfide-bonded: Cys-279/Cys-290 and Cys-293/Cys-301. Asn-289 carries N-linked (GlcNAc...) asparagine glycosylation. N-linked (GlcNAc...) asparagine glycosylation is present at Asn-366. Cys-436 and Cys-455 are joined by a disulfide.

Belongs to the AB hydrolase superfamily. Lipase family.

Its subcellular location is the secreted. The protein localises to the cell membrane. It carries out the reaction 1-hexadecanoyl-2-(9Z-octadecenoyl)-sn-glycero-3-phosphate + H2O = 2-(9Z-octadecenoyl)-sn-glycero-3-phosphate + hexadecanoate + H(+). Functionally, hydrolyzes specifically phosphatidic acid (PA) to produce 2-acyl lysophosphatidic acid (LPA; a potent bioactive lipid mediator) and fatty acid. Does not hydrolyze other phospholipids, like phosphatidylserine (PS), phosphatidylcholine (PC) and phosphatidylethanolamine (PE) or triacylglycerol (TG). In Xenopus laevis (African clawed frog), this protein is Lipase member H-B (liph-b).